The sequence spans 272 residues: Leucoagglutinating phytohemagglutinin (272 aa).

Positions 1 to 20 (MASSKFFTVLFLVLLTHANS) are cleaved as a signal peptide. An N-linked (GlcNAc...) (high mannose) asparagine glycan is attached at Asn32. Asn80 is a glycosylation site (N-linked (GlcNAc...) (complex) asparagine).

Belongs to the leguminous lectin family. Homotetramer. Post-translationally, N-glycosylated on Asn-80; contains xylose.

In terms of biological role, this insecticidal carbohydrate-binding lectin is toxic for the cowpea weevil. This Phaseolus vulgaris (Kidney bean) protein is Leucoagglutinating phytohemagglutinin (DLEC2).